The primary structure comprises 250 residues: Kv channel-interacting protein 4 (250 aa).

Positions N2–S44 are KIS. Phosphoserine occurs at positions 17 and 56. The 57-residue stretch at L61 to P117 folds into the EF-hand 1; degenerate domain. EF-hand domains follow at residues D120–G155, T156–M191, and A204–I239. Positions 133, 135, 137, 144, 169, 171, 173, 175, 180, 217, 219, 221, and 228 each coordinate Ca(2+). The segment at E237–I250 is interaction with KCND2.

Belongs to the recoverin family. Component of heteromultimeric potassium channels. Identified in potassium channel complexes containing KCND1, KCND2, KCND3, KCNIP1, KCNIP2, KCNIP3, KCNIP4, DPP6 and DPP10. Interacts with the C-terminus of PSEN2 and probably PSEN1. Interacts with KCND2 and KCND3. Expressed in brain. Highly expressed by neurons in layers II-IV of cortex and in hippocampus, thalamus and the Purkinje cell layer of the cerebellum.

The protein localises to the cell membrane. It is found in the cytoplasm. The protein resides in the peroxisome. In terms of biological role, regulatory subunit of Kv4/D (Shal)-type voltage-gated rapidly inactivating A-type potassium channels, such as KCND2/Kv4.2 and KCND3/Kv4.3. Modulates channel expression at the cell membrane, gating characteristics, inactivation kinetics and rate of recovery from inactivation in a calcium-dependent and isoform-specific manner. The polypeptide is Kv channel-interacting protein 4 (Kcnip4) (Mus musculus (Mouse)).